The sequence spans 75 residues: MEKEFNFEEDLKRLEEIVDTLEKGNLMLEESFNLFKEGVEISKRLEKMLKEVEGKITMLISEDEEIEFKEEENNV.

The protein belongs to the XseB family. As to quaternary structure, heterooligomer composed of large and small subunits.

It is found in the cytoplasm. The catalysed reaction is Exonucleolytic cleavage in either 5'- to 3'- or 3'- to 5'-direction to yield nucleoside 5'-phosphates.. Functionally, bidirectionally degrades single-stranded DNA into large acid-insoluble oligonucleotides, which are then degraded further into small acid-soluble oligonucleotides. The protein is Exodeoxyribonuclease 7 small subunit of Caldanaerobacter subterraneus subsp. tengcongensis (strain DSM 15242 / JCM 11007 / NBRC 100824 / MB4) (Thermoanaerobacter tengcongensis).